Reading from the N-terminus, the 174-residue chain is Inner membrane protein p22 (174 aa).

Over 1 to 7 (MLHIKMT) the chain is Intravirion. Residues 8–28 (ISTLLIALIVLLIIILVVFLY) form a helical membrane-spanning segment. The Virion surface segment spans residues 29–174 (HKKQQPPKKV…LYLPRNHKYA (146 aa)).

This sequence belongs to the asfivirus inner membrane protein p22 family.

The protein resides in the virion membrane. It is found in the host cell membrane. The chain is Inner membrane protein p22 from African swine fever virus (isolate Pig/Kenya/KEN-50/1950) (ASFV).